Reading from the N-terminus, the 476-residue chain is Ribulose bisphosphate carboxylase large chain (476 aa).

Substrate-binding residues include asparagine 124 and threonine 174. Catalysis depends on lysine 176, which acts as the Proton acceptor. A substrate-binding site is contributed by lysine 178. Mg(2+) is bound by residues lysine 202, aspartate 204, and glutamate 205. At lysine 202 the chain carries N6-carboxylysine. Residue histidine 295 is the Proton acceptor of the active site. Substrate is bound by residues arginine 296, histidine 328, and serine 380.

The protein belongs to the RuBisCO large chain family. Type I subfamily. As to quaternary structure, heterohexadecamer of 8 large chains and 8 small chains; disulfide-linked. The disulfide link is formed within the large subunit homodimers. Forms complexes of many stoichiometries with Raf1 with and without RbcS. RuBisCO interacts with the C-terminus of CcmM. Mg(2+) is required as a cofactor. Post-translationally, the disulfide bond which can form in the large chain dimeric partners within the hexadecamer appears to be associated with oxidative stress and protein turnover.

The protein resides in the carboxysome. It carries out the reaction 2 (2R)-3-phosphoglycerate + 2 H(+) = D-ribulose 1,5-bisphosphate + CO2 + H2O. The enzyme catalyses D-ribulose 1,5-bisphosphate + O2 = 2-phosphoglycolate + (2R)-3-phosphoglycerate + 2 H(+). In terms of biological role, ruBisCO catalyzes two reactions: the carboxylation of D-ribulose 1,5-bisphosphate, the primary event in carbon dioxide fixation, as well as the oxidative fragmentation of the pentose substrate in the photorespiration process. Both reactions occur simultaneously and in competition at the same active site. In Nostoc sp. (strain PCC 7120 / SAG 25.82 / UTEX 2576), this protein is Ribulose bisphosphate carboxylase large chain.